The chain runs to 876 residues: Alanine--tRNA ligase (876 aa).

4 residues coordinate Zn(2+): His-562, His-566, Cys-666, and His-670.

The protein belongs to the class-II aminoacyl-tRNA synthetase family. It depends on Zn(2+) as a cofactor.

It is found in the cytoplasm. The catalysed reaction is tRNA(Ala) + L-alanine + ATP = L-alanyl-tRNA(Ala) + AMP + diphosphate. Its function is as follows. Catalyzes the attachment of alanine to tRNA(Ala) in a two-step reaction: alanine is first activated by ATP to form Ala-AMP and then transferred to the acceptor end of tRNA(Ala). Also edits incorrectly charged Ser-tRNA(Ala) and Gly-tRNA(Ala) via its editing domain. This is Alanine--tRNA ligase from Marinobacter nauticus (strain ATCC 700491 / DSM 11845 / VT8) (Marinobacter aquaeolei).